Reading from the N-terminus, the 327-residue chain is T-cell surface glycoprotein CD1a (327 aa).

The N-terminal stretch at 1 to 16 (MLFLLLPLLAVLPGDG) is a signal peptide. Topologically, residues 17-300 (NADGLKEPLS…VLYWEHHSSV (284 aa)) are extracellular. Asparagine 37, asparagine 60, and asparagine 74 each carry an N-linked (GlcNAc...) asparagine glycan. Residue 90–94 (RTIRS) participates in a D-galactosylceramide binding. 2 disulfide bridges follow: cysteine 119/cysteine 183 and cysteine 223/cysteine 278. Asparagine 145 carries an N-linked (GlcNAc...) asparagine glycan. A D-galactosylceramide-binding residues include glutamate 171 and threonine 175. Residues 184 to 291 (PRFILGLLDA…HSSLEGQDIV (108 aa)) enclose the Ig-like domain. A helical membrane pass occupies residues 301-321 (GFIILAVIVPLLLLIGLALWF). Residues 322-327 (RKRCFC) lie on the Cytoplasmic side of the membrane.

As to quaternary structure, heterodimer with B2M (beta-2-microglobulin). Interacts with CD74. In terms of tissue distribution, expressed on cortical thymocytes, epidermal Langerhans cells, dendritic cells, on certain T-cell leukemias, and in various other tissues.

The protein localises to the cell membrane. The protein resides in the membrane raft. Its subcellular location is the endosome membrane. Antigen-presenting protein that binds self and non-self lipid and glycolipid antigens and presents them to T-cell receptors on natural killer T-cells. The protein is T-cell surface glycoprotein CD1a (CD1A) of Homo sapiens (Human).